We begin with the raw amino-acid sequence, 247 residues long: uncharacterized protein (247 aa).

Residues 161–187 form a disordered region; the sequence is KEQSDATSDATTSEKNKSPECPKATTE. Residues 172–187 are compositionally biased toward basic and acidic residues; the sequence is TSEKNKSPECPKATTE.

This is an uncharacterized protein from Mus musculus (Mouse).